We begin with the raw amino-acid sequence, 138 residues long: Acidic phospholipase A2 Cvv-E6b (138 aa).

Positions 1-16 (MRTLWILAVLLLGVEG) are cleaved as a signal peptide. 7 cysteine pairs are disulfide-bonded: C42/C131, C44/C60, C59/C111, C65/C138, C66/C104, C73/C97, and C91/C102. Y43, G45, and G47 together coordinate Ca(2+). H63 is an active-site residue. D64 serves as a coordination point for Ca(2+). D105 is a catalytic residue.

Ca(2+) serves as cofactor. Expressed by the venom gland.

Its subcellular location is the secreted. It carries out the reaction a 1,2-diacyl-sn-glycero-3-phosphocholine + H2O = a 1-acyl-sn-glycero-3-phosphocholine + a fatty acid + H(+). Functionally, snake venom phospholipase A2 (PLA2) that shows very low inhibition of ADP-induced platelet aggregation in platelet-rich plasma of human, rabbit and guinea pig. PLA2 catalyzes the calcium-dependent hydrolysis of the 2-acyl groups in 3-sn-phosphoglycerides. This is Acidic phospholipase A2 Cvv-E6b from Crotalus viridis viridis (Prairie rattlesnake).